We begin with the raw amino-acid sequence, 516 residues long: 2,3-bisphosphoglycerate-independent phosphoglycerate mutase (516 aa).

D14 and S64 together coordinate Mn(2+). S64 functions as the Phosphoserine intermediate in the catalytic mechanism. Substrate is bound by residues H125, 155–156 (RD), R187, R193, 263–266 (RPDR), and K337. Mn(2+)-binding residues include D404, H408, D445, H446, and H464.

This sequence belongs to the BPG-independent phosphoglycerate mutase family. Monomer. The cofactor is Mn(2+).

It catalyses the reaction (2R)-2-phosphoglycerate = (2R)-3-phosphoglycerate. Its pathway is carbohydrate degradation; glycolysis; pyruvate from D-glyceraldehyde 3-phosphate: step 3/5. In terms of biological role, catalyzes the interconversion of 2-phosphoglycerate and 3-phosphoglycerate. The polypeptide is 2,3-bisphosphoglycerate-independent phosphoglycerate mutase (Saccharophagus degradans (strain 2-40 / ATCC 43961 / DSM 17024)).